The chain runs to 581 residues: 2-succinyl-5-enolpyruvyl-6-hydroxy-3-cyclohexene-1-carboxylate synthase (581 aa).

Belongs to the TPP enzyme family. MenD subfamily. As to quaternary structure, homodimer. It depends on Mg(2+) as a cofactor. Mn(2+) serves as cofactor. The cofactor is thiamine diphosphate.

It catalyses the reaction isochorismate + 2-oxoglutarate + H(+) = 5-enolpyruvoyl-6-hydroxy-2-succinyl-cyclohex-3-ene-1-carboxylate + CO2. It functions in the pathway quinol/quinone metabolism; 1,4-dihydroxy-2-naphthoate biosynthesis; 1,4-dihydroxy-2-naphthoate from chorismate: step 2/7. The protein operates within quinol/quinone metabolism; menaquinone biosynthesis. Its function is as follows. Catalyzes the thiamine diphosphate-dependent decarboxylation of 2-oxoglutarate and the subsequent addition of the resulting succinic semialdehyde-thiamine pyrophosphate anion to isochorismate to yield 2-succinyl-5-enolpyruvyl-6-hydroxy-3-cyclohexene-1-carboxylate (SEPHCHC). The polypeptide is 2-succinyl-5-enolpyruvyl-6-hydroxy-3-cyclohexene-1-carboxylate synthase (Psychromonas ingrahamii (strain DSM 17664 / CCUG 51855 / 37)).